The sequence spans 424 residues: Serine--tRNA ligase (424 aa).

229-231 lines the L-serine pocket; the sequence is TAE. Residues 260–262 and Val276 contribute to the ATP site; that span reads RKE. Glu283 lines the L-serine pocket. Residue 347–350 participates in ATP binding; the sequence is ELVS. Residue Thr383 participates in L-serine binding.

Belongs to the class-II aminoacyl-tRNA synthetase family. Type-1 seryl-tRNA synthetase subfamily. Homodimer. The tRNA molecule binds across the dimer.

The protein localises to the cytoplasm. The enzyme catalyses tRNA(Ser) + L-serine + ATP = L-seryl-tRNA(Ser) + AMP + diphosphate + H(+). The catalysed reaction is tRNA(Sec) + L-serine + ATP = L-seryl-tRNA(Sec) + AMP + diphosphate + H(+). It functions in the pathway aminoacyl-tRNA biosynthesis; selenocysteinyl-tRNA(Sec) biosynthesis; L-seryl-tRNA(Sec) from L-serine and tRNA(Sec): step 1/1. Its function is as follows. Catalyzes the attachment of serine to tRNA(Ser). Is also able to aminoacylate tRNA(Sec) with serine, to form the misacylated tRNA L-seryl-tRNA(Sec), which will be further converted into selenocysteinyl-tRNA(Sec). This chain is Serine--tRNA ligase, found in Methanosphaera stadtmanae (strain ATCC 43021 / DSM 3091 / JCM 11832 / MCB-3).